The following is a 151-amino-acid chain: uncharacterized protein (151 aa).

4Fe-4S ferredoxin-type domains follow at residues 4-32, 33-63, and 64-93; these read KIIV…ESRV, RKVD…YLKD, and GIPI…IKNR. Cysteine 13, cysteine 16, cysteine 19, cysteine 23, cysteine 42, cysteine 45, cysteine 50, cysteine 54, cysteine 73, cysteine 76, cysteine 79, cysteine 83, cysteine 98, cysteine 101, cysteine 111, and cysteine 115 together coordinate [4Fe-4S] cluster.

The cofactor is [4Fe-4S] cluster.

This is an uncharacterized protein from Methanocaldococcus jannaschii (strain ATCC 43067 / DSM 2661 / JAL-1 / JCM 10045 / NBRC 100440) (Methanococcus jannaschii).